The primary structure comprises 397 residues: Elongation factor Tu (397 aa).

The tr-type G domain occupies 10–206; that stretch reads KPHVNIGTIG…AVDASIPEPE (197 aa). The G1 stretch occupies residues 19–26; it reads GHIDHGKT. A GTP-binding site is contributed by 19 to 26; that stretch reads GHIDHGKT. A Mg(2+)-binding site is contributed by Thr-26. The tract at residues 62–66 is G2; that stretch reads GITIS. Positions 83–86 are G3; that stretch reads DCPG. Residues 83-87 and 138-141 each bind GTP; these read DCPGH and NKAD. Positions 138–141 are G4; it reads NKAD. The interval 176 to 178 is G5; sequence SAL.

It belongs to the TRAFAC class translation factor GTPase superfamily. Classic translation factor GTPase family. EF-Tu/EF-1A subfamily. As to quaternary structure, monomer.

It localises to the cytoplasm. It catalyses the reaction GTP + H2O = GDP + phosphate + H(+). Its function is as follows. GTP hydrolase that promotes the GTP-dependent binding of aminoacyl-tRNA to the A-site of ribosomes during protein biosynthesis. The sequence is that of Elongation factor Tu from Parafrankia sp. (strain EAN1pec).